Here is a 363-residue protein sequence, read N- to C-terminus: NADH-quinone oxidoreductase subunit H (363 aa).

Helical transmembrane passes span 29-49 (VLKILLIAVPVIVTVAFYVVW), 62-82 (GPMYVGMGIFQAFADVFKLLF), 96-116 (FIIAPLLTLAPAFAAWSVVPF), 127-147 (VGLLYLLAMTSLGVYGIILAG), 163-183 (AAQVVSYEIAMGFALVGVMIA), 202-222 (FFDWFLIPLFPLFIVYWVSGV), 239-257 (IVAGHMVEYSGGAFALFFL), 264-286 (ILVSFLISIFFLGGWLSPIQGWV), 299-319 (TGGWPWLLMKVFFFASAYIWF), and 339-359 (FIPLTIVWIAVTALMVFYGVI).

It belongs to the complex I subunit 1 family. NDH-1 is composed of 14 different subunits. Subunits NuoA, H, J, K, L, M, N constitute the membrane sector of the complex.

It is found in the cell inner membrane. The enzyme catalyses a quinone + NADH + 5 H(+)(in) = a quinol + NAD(+) + 4 H(+)(out). Functionally, NDH-1 shuttles electrons from NADH, via FMN and iron-sulfur (Fe-S) centers, to quinones in the respiratory chain. The immediate electron acceptor for the enzyme in this species is believed to be ubiquinone. Couples the redox reaction to proton translocation (for every two electrons transferred, four hydrogen ions are translocated across the cytoplasmic membrane), and thus conserves the redox energy in a proton gradient. This subunit may bind ubiquinone. The sequence is that of NADH-quinone oxidoreductase subunit H from Xanthomonas campestris pv. campestris (strain B100).